The following is a 118-amino-acid chain: uncharacterized protein (118 aa).

Residues 98-118 form a disordered region; the sequence is KGKGNEGREEAEEPLEEPEEG. Acidic residues predominate over residues 106-118; it reads EEAEEPLEEPEEG.

The protein belongs to the UPF0440 family.

This is an uncharacterized protein from Pyrococcus abyssi (strain GE5 / Orsay).